The primary structure comprises 48 residues: Bacteriochlorophyll c-binding protein (48 aa).

Residue H25 participates in a bacteriochlorophyll c binding.

The protein belongs to the BChl C/E-binding protein family.

The protein resides in the chlorosome. It localises to the chlorosome envelope. Component of the photosynthetic apparatus. The light harvesting B740 complex binds bacteriochlorophyll c. The polypeptide is Bacteriochlorophyll c-binding protein (csmA) (Chlorobaculum thiosulfatiphilum (Chlorobium limicola f.sp. thiosulfatophilum)).